Here is a 423-residue protein sequence, read N- to C-terminus: Adenylosuccinate synthetase (423 aa).

The active-site Proton acceptor is Asp12. Positions 12 and 39 each coordinate Mg(2+). IMP-binding positions include 37-40, Thr129, Arg143, Asn221, Thr236, and Arg300; that span reads NAGH. Position 39–41 (39–41) interacts with GTP; sequence GHS. His40 acts as the Proton donor in catalysis. 296–302 lines the substrate pocket; the sequence is VSTGRKR. GTP contacts are provided by residues Arg302, 328-330, and 412-414; these read KLD and GTG.

It belongs to the adenylosuccinate synthetase family. As to quaternary structure, homodimer. Mg(2+) is required as a cofactor.

It is found in the cytoplasm. The catalysed reaction is IMP + L-aspartate + GTP = N(6)-(1,2-dicarboxyethyl)-AMP + GDP + phosphate + 2 H(+). The protein operates within purine metabolism; AMP biosynthesis via de novo pathway; AMP from IMP: step 1/2. In terms of biological role, plays an important role in the de novo pathway and in the salvage pathway of purine nucleotide biosynthesis. Catalyzes the first committed step in the biosynthesis of AMP from IMP. In Pyricularia oryzae (strain 70-15 / ATCC MYA-4617 / FGSC 8958) (Rice blast fungus), this protein is Adenylosuccinate synthetase.